We begin with the raw amino-acid sequence, 272 residues long: ATP synthase subunit a (272 aa).

5 consecutive transmembrane segments (helical) span residues Thr-41–Phe-61, Ile-102–Val-122, Asp-147–Ile-167, Leu-212–Trp-232, and Ala-243–Val-263.

This sequence belongs to the ATPase A chain family. F-type ATPases have 2 components, CF(1) - the catalytic core - and CF(0) - the membrane proton channel. CF(1) has five subunits: alpha(3), beta(3), gamma(1), delta(1), epsilon(1). CF(0) has three main subunits: a(1), b(2) and c(9-12). The alpha and beta chains form an alternating ring which encloses part of the gamma chain. CF(1) is attached to CF(0) by a central stalk formed by the gamma and epsilon chains, while a peripheral stalk is formed by the delta and b chains.

It is found in the cell inner membrane. In terms of biological role, key component of the proton channel; it plays a direct role in the translocation of protons across the membrane. The polypeptide is ATP synthase subunit a (Edwardsiella ictaluri (strain 93-146)).